The primary structure comprises 590 residues: Glutathione S-transferase T3 (590 aa).

Positions 1 to 82 constitute a GST N-terminal domain; sequence MKLKVYADRM…YLSSAYPSVV (82 aa). Glutathione-binding positions include 11–12, 40–41, 53–54, and 66–67; these read SQ, QL, KV, and ES. The region spanning 89-232 is the GST C-terminal domain; that stretch reads DLSKRARIHS…KDRCQKQREM (144 aa). A Myb-like domain is found at 265-336; the sequence is DRRKHRRKWS…HCKQRWSKLN (72 aa). Residues 402 to 427 are disordered; the sequence is SKGGGSSKRTKLNNGDRVYSSSSNPE.

This sequence belongs to the GST superfamily. Theta family.

It is found in the nucleus. The enzyme catalyses RX + glutathione = an S-substituted glutathione + a halide anion + H(+). Its function is as follows. May be involved in the conjugation of reduced glutathione to a wide number of exogenous and endogenous hydrophobic electrophiles and have a detoxification role against certain herbicides. This chain is Glutathione S-transferase T3 (GSTT3), found in Arabidopsis thaliana (Mouse-ear cress).